We begin with the raw amino-acid sequence, 1183 residues long: DNA-directed RNA polymerase subunit beta (1183 aa).

It belongs to the RNA polymerase beta chain family. The RNAP catalytic core consists of 2 alpha, 1 beta, 1 beta' and 1 omega subunit. When a sigma factor is associated with the core the holoenzyme is formed, which can initiate transcription.

It catalyses the reaction RNA(n) + a ribonucleoside 5'-triphosphate = RNA(n+1) + diphosphate. Its function is as follows. DNA-dependent RNA polymerase catalyzes the transcription of DNA into RNA using the four ribonucleoside triphosphates as substrates. The polypeptide is DNA-directed RNA polymerase subunit beta (Staphylococcus aureus (strain Mu50 / ATCC 700699)).